A 191-amino-acid chain; its full sequence is Prostaglandin-H2 D-isomerase (191 aa).

The N-terminal stretch at 1–28 (MATPNRLWMALLLLGVLGVLQTPAPAQA) is a signal peptide. N-linked (GlcNAc...) asparagine glycosylation occurs at Asn-51. Cys-65 acts as the Nucleophile in catalysis. N-linked (GlcNAc...) asparagine glycosylation occurs at Asn-78. The cysteines at positions 89 and 186 are disulfide-linked.

The protein belongs to the calycin superfamily. Lipocalin family. As to quaternary structure, monomer. In terms of tissue distribution, in the male reproductive system, expressed in the testis, epididymis and prostate, and secreted into the seminal fluid.

It is found in the rough endoplasmic reticulum. Its subcellular location is the nucleus membrane. It localises to the golgi apparatus. The protein localises to the cytoplasm. The protein resides in the perinuclear region. It is found in the secreted. It catalyses the reaction prostaglandin H2 = prostaglandin D2. Its function is as follows. Catalyzes the conversion of PGH2 to PGD2, a prostaglandin involved in smooth muscle contraction/relaxation and a potent inhibitor of platelet aggregation. Involved in a variety of CNS functions, such as sedation, NREM sleep and PGE2-induced allodynia, and may have an anti-apoptotic role in oligodendrocytes. Binds small non-substrate lipophilic molecules, including biliverdin, bilirubin, retinal, retinoic acid and thyroid hormone, and may act as a scavenger for harmful hydrophobic molecules and as a secretory retinoid and thyroid hormone transporter. Possibly involved in development and maintenance of the blood-brain, blood-retina, blood-aqueous humor and blood-testis barrier. It is likely to play important roles in both maturation and maintenance of the central nervous system and male reproductive system. Involved in PLA2G3-dependent maturation of mast cells. PLA2G3 is secreted by immature mast cells and acts on nearby fibroblasts upstream to PTDGS to synthesize PGD2, which in turn promotes mast cell maturation and degranulation via PTGDR. The protein is Prostaglandin-H2 D-isomerase (PTGDS) of Bos taurus (Bovine).